The sequence spans 75 residues: UPF0352 protein ETA_12580 (75 aa).

This sequence belongs to the UPF0352 family.

This Erwinia tasmaniensis (strain DSM 17950 / CFBP 7177 / CIP 109463 / NCPPB 4357 / Et1/99) protein is UPF0352 protein ETA_12580.